We begin with the raw amino-acid sequence, 349 residues long: GMP reductase (349 aa).

Residue 108-131 (LDFFKIKKIFSLSSELKYICIDVA) coordinates NADP(+). Positions 181 and 183 each coordinate K(+). The active-site Thioimidate intermediate is the Cys186. 216-239 (IISDGGCTVSGDIAKAFGGGADFV) contributes to the NADP(+) binding site.

Belongs to the IMPDH/GMPR family. GuaC type 1 subfamily. As to quaternary structure, homotetramer.

The catalysed reaction is IMP + NH4(+) + NADP(+) = GMP + NADPH + 2 H(+). Functionally, catalyzes the irreversible NADPH-dependent deamination of GMP to IMP. It functions in the conversion of nucleobase, nucleoside and nucleotide derivatives of G to A nucleotides, and in maintaining the intracellular balance of A and G nucleotides. The polypeptide is GMP reductase (Buchnera aphidicola subsp. Schizaphis graminum (strain Sg)).